The following is a 322-amino-acid chain: Mitochondrial thiamine pyrophosphate carrier 1 (322 aa).

3 Solcar repeats span residues 12-111, 122-208, and 215-310; these read GSKT…VTLG, PAAA…LRLP, and PFGS…VLGI. A run of 6 helical transmembrane segments spans residues 18 to 38, 92 to 108, 128 to 148, 180 to 200, 221 to 241, and 285 to 302; these read MIAG…LDVV, LMYV…YRSV, FIAG…LDLL, FFQG…IFFA, ASAG…FDLI, and GLTV…VTMW.

Belongs to the mitochondrial carrier (TC 2.A.29) family.

It localises to the mitochondrion inner membrane. Mitochondrial transporter that mediates uptake of thiamine pyrophosphate (ThPP) into mitochondria. The protein is Mitochondrial thiamine pyrophosphate carrier 1 (tpc1) of Botryotinia fuckeliana (strain B05.10) (Noble rot fungus).